The sequence spans 145 residues: Nucleoside diphosphate kinase (145 aa).

Residues K11, F59, R87, T93, R104, and N114 each coordinate ATP. H117 serves as the catalytic Pros-phosphohistidine intermediate.

The protein belongs to the NDK family. Homotetramer. It depends on Mg(2+) as a cofactor.

Its subcellular location is the cytoplasm. It catalyses the reaction a 2'-deoxyribonucleoside 5'-diphosphate + ATP = a 2'-deoxyribonucleoside 5'-triphosphate + ADP. It carries out the reaction a ribonucleoside 5'-diphosphate + ATP = a ribonucleoside 5'-triphosphate + ADP. Major role in the synthesis of nucleoside triphosphates other than ATP. The ATP gamma phosphate is transferred to the NDP beta phosphate via a ping-pong mechanism, using a phosphorylated active-site intermediate. The chain is Nucleoside diphosphate kinase from Myxococcus xanthus.